A 380-amino-acid chain; its full sequence is Tryptophan 2,3-dioxygenase (380 aa).

Residues 57-61 (FIITH) and R128 contribute to the substrate site. Heme is bound at residue H313. T328 contacts substrate.

Belongs to the tryptophan 2,3-dioxygenase family. As to quaternary structure, homotetramer. Dimer of dimers. The cofactor is heme.

It catalyses the reaction L-tryptophan + O2 = N-formyl-L-kynurenine. The protein operates within amino-acid degradation; L-tryptophan degradation via kynurenine pathway; L-kynurenine from L-tryptophan: step 1/2. It functions in the pathway pigment biosynthesis; ommochrome biosynthesis. Heme-dependent dioxygenase that catalyzes the oxidative cleavage of the L-tryptophan (L-Trp) pyrrole ring and converts L-tryptophan to N-formyl-L-kynurenine. Catalyzes the oxidative cleavage of the indole moiety. The chain is Tryptophan 2,3-dioxygenase from Drosophila willistoni (Fruit fly).